The primary structure comprises 455 residues: UDP-N-acetylmuramoylalanine--D-glutamate ligase (455 aa).

119–125 provides a ligand contact to ATP; that stretch reads GTNGKTT.

The protein belongs to the MurCDEF family.

The protein localises to the cytoplasm. It catalyses the reaction UDP-N-acetyl-alpha-D-muramoyl-L-alanine + D-glutamate + ATP = UDP-N-acetyl-alpha-D-muramoyl-L-alanyl-D-glutamate + ADP + phosphate + H(+). Its pathway is cell wall biogenesis; peptidoglycan biosynthesis. Cell wall formation. Catalyzes the addition of glutamate to the nucleotide precursor UDP-N-acetylmuramoyl-L-alanine (UMA). In Listeria monocytogenes serotype 4b (strain F2365), this protein is UDP-N-acetylmuramoylalanine--D-glutamate ligase.